The chain runs to 680 residues: Tumor protein 63 (680 aa).

The interval 1–107 is transcription activation; sequence MNFETSRCAT…MQDSDLSDPM (107 aa). The span at 122-157 shows a compositional bias: polar residues; it reads QQIQNGSSSTSPYNTDHAQNSVTAPSPYAQPSSTFD. The interval 122–171 is disordered; it reads QQIQNGSSSTSPYNTDHAQNSVTAPSPYAQPSSTFDALSPSPAIPSNTDY. A DNA-binding region spans residues 170 to 362; the sequence is DYPGPHSFDV…KADEDSIRKQ (193 aa). Zn(2+) is bound by residues C244, H247, C308, and C312. A compositionally biased stretch (basic and acidic residues) spans 351 to 360; sequence DRKADEDSIR. 2 disordered regions span residues 351 to 393 and 436 to 472; these read DRKA…IKKR and RQQQQQQHQHLLQKQTSMQSQSSYGNSSPPLNKMNSM. Residues 352 to 388 are interaction with HIPK2; the sequence is RKADEDSIRKQQVSDSAKNGDGTKRPFRQNTHGIQMT. Residues 379–389 show a composition bias toward polar residues; sequence RQNTHGIQMTS. The segment at 394-443 is oligomerization; sequence RSPDDELLYLPVRGRETYEMLLKIKESLELMQYLPQHTIETYRQQQQQQH. Positions 437 to 463 are enriched in low complexity; it reads QQQQQQHQHLLQKQTSMQSQSSYGNSS. Residues 541–607 form the SAM domain; that stretch reads PPYPTDCSIV…WKGILDHRQL (67 aa). A transactivation inhibition region spans residues 610–680; the sequence is FSSPPHLLRT…KQQRIKEEGE (71 aa). K676 participates in a covalent cross-link: Glycyl lysine isopeptide (Lys-Gly) (interchain with G-Cter in SUMO).

Belongs to the p53 family. In terms of assembly, binds DNA as a homotetramer. Isoform composition of the tetramer may determine transactivation activity. Interacts with HIPK2. Interacts with SSRP1, leading to stimulate coactivator activity. Interacts with WWP1. Interacts with PDS5A. Interacts (via activation domain) with NOC2L. Zn(2+) is required as a cofactor. In terms of processing, may be sumoylated. Post-translationally, ubiquitinated. Polyubiquitination involves WWP1 and leads to proteasomal degradation of this protein. Widely expressed, notably in thymus, prostate, placenta, and skeletal muscle, although the precise isoform varies according to tissue type. Progenitor cell layers of skin, breast and prostate express high levels of DeltaN-type isoforms.

It localises to the nucleus. Functionally, acts as a sequence specific DNA binding transcriptional activator or repressor. The isoforms contain a varying set of transactivation and auto-regulating transactivation inhibiting domains thus showing an isoform specific activity. May be required in conjunction with TP73/p73 for initiation of p53/TP53 dependent apoptosis in response to genotoxic insults and the presence of activated oncogenes. Involved in Notch signaling by probably inducing JAG1 and JAG2. Activates RIPK4 transcription. Plays a role in the regulation of epithelial morphogenesis. The ratio of DeltaN-type and TA*-type isoforms may govern the maintenance of epithelial stem cell compartments and regulate the initiation of epithelial stratification from the undifferentiated embryonal ectoderm. Required for limb formation from the apical ectodermal ridge. Activates transcription of the p21 promoter. The chain is Tumor protein 63 (Tp63) from Rattus norvegicus (Rat).